We begin with the raw amino-acid sequence, 224 residues long: MKVLILACLVALALARELEELNVPGEIVESLSSSEESITRINKKIEKFQSEEQQQTEDELQDKIHPFAQTQSLVYPFPGPIPNSLPQNIPPLTQTPVVVPPFLQPEVMGVSKVKEAMAPKHKEMPFPKYPVEPFTESQSLTLTDVENLHLPLPLLQSWMHQPHQPLPPTVMFPPQSVLSLSQSKVLPVPQKAVPYPQRDMPIQAFLLYQEPVLGPVRGPFPIIV.

Residues 1-15 form the signal peptide; that stretch reads MKVLILACLVALALA. Phosphoserine is present on residues S30, S32, S33, and S34. Phosphoserine; in variant A1, variant A2, variant A3, variant B, variant E, variant F, variant G and variant H is present on S50.

Belongs to the beta-casein family. As to expression, mammary gland specific. Secreted in milk.

Its subcellular location is the secreted. Its function is as follows. Important role in determination of the surface properties of the casein micelles. Functionally, casoparan acts as a macrophage activator, increasing the phagocytic activity of macrophages and peroxide release from macrophages. It also acts as a bradykinin-potentiating peptide. In terms of biological role, casohypotensin acts as a bradykinin-potentiating peptide. Induces hypotension in rats. Acts as a strong competitive inhibitor of endo-oligopeptidase A. Antioxidant peptide has antioxidant activity. This is Beta-casein (CSN2) from Bos taurus (Bovine).